We begin with the raw amino-acid sequence, 471 residues long: Chromosomal replication initiator protein DnaA (471 aa).

A domain I, interacts with DnaA modulators region spans residues 1 to 77 (MELNSSFWTL…YTEISDTYGK (77 aa)). The segment at 77-130 (KPFEVEFSITGNKINSHIETSTTPDEVLSGSEILQAQLARAQNIQPTQPRSSSD) is domain II. Residues 131 to 349 (TLNSELTFST…GNLKKVKMFS (219 aa)) form a domain III, AAA+ region region. ATP-binding residues include Gly-176, Gly-178, Lys-179, and Thr-180. The domain IV, binds dsDNA stretch occupies residues 350–471 (ELQGLPIDHE…EQRIHNITRV (122 aa)).

It belongs to the DnaA family. Oligomerizes as a right-handed, spiral filament on DNA at oriC.

The protein resides in the cytoplasm. Functionally, plays an essential role in the initiation and regulation of chromosomal replication. ATP-DnaA binds to the origin of replication (oriC) to initiate formation of the DNA replication initiation complex once per cell cycle. Binds the DnaA box (a 9 base pair repeat at the origin) and separates the double-stranded (ds)DNA. Forms a right-handed helical filament on oriC DNA; dsDNA binds to the exterior of the filament while single-stranded (ss)DNA is stabiized in the filament's interior. The ATP-DnaA-oriC complex binds and stabilizes one strand of the AT-rich DNA unwinding element (DUE), permitting loading of DNA polymerase. After initiation quickly degrades to an ADP-DnaA complex that is not apt for DNA replication. Binds acidic phospholipids. The sequence is that of Chromosomal replication initiator protein DnaA from Bdellovibrio bacteriovorus (strain ATCC 15356 / DSM 50701 / NCIMB 9529 / HD100).